The primary structure comprises 313 residues: Ribosomal RNA small subunit methyltransferase H (313 aa).

S-adenosyl-L-methionine-binding positions include 35 to 37 (GGH), Asp55, Phe79, Asp101, and Gln108.

This sequence belongs to the methyltransferase superfamily. RsmH family.

Its subcellular location is the cytoplasm. The catalysed reaction is cytidine(1402) in 16S rRNA + S-adenosyl-L-methionine = N(4)-methylcytidine(1402) in 16S rRNA + S-adenosyl-L-homocysteine + H(+). Specifically methylates the N4 position of cytidine in position 1402 (C1402) of 16S rRNA. This Escherichia coli O139:H28 (strain E24377A / ETEC) protein is Ribosomal RNA small subunit methyltransferase H.